A 168-amino-acid polypeptide reads, in one-letter code: 2-oxo-4-hydroxy-4-carboxy-5-ureidoimidazoline decarboxylase (168 aa).

Histidine 70 (proton donor; for OHCU decarboxylase activity) is an active-site residue. Residues 70 to 79 (HPDLGERTEM) are compositionally biased toward basic and acidic residues. The tract at residues 70–93 (HPDLGERTEMTDASEAEQASAELD) is disordered. Substrate is bound by residues proline 71, 83-87 (SEAEQ), and 118-122 (FVMAV).

This sequence belongs to the OHCU decarboxylase family.

The catalysed reaction is 5-hydroxy-2-oxo-4-ureido-2,5-dihydro-1H-imidazole-5-carboxylate + H(+) = (S)-allantoin + CO2. It participates in purine metabolism; urate degradation; (S)-allantoin from urate: step 3/3. In terms of biological role, catalyzes the stereoselective decarboxylation of 2-oxo-4-hydroxy-4-carboxy-5-ureidoimidazoline (OHCU) to (S)-allantoin. This is 2-oxo-4-hydroxy-4-carboxy-5-ureidoimidazoline decarboxylase from Haloferax volcanii (strain ATCC 29605 / DSM 3757 / JCM 8879 / NBRC 14742 / NCIMB 2012 / VKM B-1768 / DS2) (Halobacterium volcanii).